Reading from the N-terminus, the 156-residue chain is Type II secretion system core protein G (156 aa).

Positions 1-22 (MQQSQRGCGQNSYGQSGYRQRG) are cleaved as a propeptide — leader sequence. The residue at position 23 (Phe23) is an N-methylphenylalanine. Residues 23–43 (FTLLEIMVVIVILGVLASLVV) traverse the membrane as a helical segment.

This sequence belongs to the GSP G family. As to quaternary structure, type II secretion system is composed of four main components: the outer membrane complex, the inner membrane complex, the cytoplasmic secretion ATPase and the periplasm-spanning pseudopilus. Forms homomultimers. Post-translationally, cleaved by the prepilin peptidase. Methylated by prepilin peptidase at the amino group of the N-terminal phenylalanine once the leader sequence is cleaved.

The protein localises to the cell inner membrane. Its function is as follows. Core component of the type II secretion system required for the energy-dependent secretion of extracellular factors such as proteases and toxins from the periplasm. Pseudopilin (pilin-like) protein that polymerizes to form the pseudopilus. Further polymerization triggers pseudopilus growth. This chain is Type II secretion system core protein G (outG), found in Pectobacterium carotovorum subsp. carotovorum (Erwinia carotovora subsp. carotovora).